A 416-amino-acid polypeptide reads, in one-letter code: Serine hydroxymethyltransferase (416 aa).

(6S)-5,6,7,8-tetrahydrofolate contacts are provided by residues Leu118 and 122 to 124; that span reads GHL. The residue at position 226 (Lys226) is an N6-(pyridoxal phosphate)lysine. (6S)-5,6,7,8-tetrahydrofolate-binding positions include Glu242 and 350 to 352; that span reads SPF.

It belongs to the SHMT family. Homodimer. It depends on pyridoxal 5'-phosphate as a cofactor.

The protein resides in the cytoplasm. It catalyses the reaction (6R)-5,10-methylene-5,6,7,8-tetrahydrofolate + glycine + H2O = (6S)-5,6,7,8-tetrahydrofolate + L-serine. It functions in the pathway one-carbon metabolism; tetrahydrofolate interconversion. Its pathway is amino-acid biosynthesis; glycine biosynthesis; glycine from L-serine: step 1/1. Catalyzes the reversible interconversion of serine and glycine with tetrahydrofolate (THF) serving as the one-carbon carrier. This reaction serves as the major source of one-carbon groups required for the biosynthesis of purines, thymidylate, methionine, and other important biomolecules. Also exhibits THF-independent aldolase activity toward beta-hydroxyamino acids, producing glycine and aldehydes, via a retro-aldol mechanism. The polypeptide is Serine hydroxymethyltransferase (Helicobacter hepaticus (strain ATCC 51449 / 3B1)).